The following is a 720-amino-acid chain: Polyribonucleotide nucleotidyltransferase (720 aa).

Asp-487 and Asp-493 together coordinate Mg(2+). The region spanning 554 to 613 (PRIETFKIPTDKIREVIGTGGKVIREIVEKTGAKVNIEDDGTVKVASSDGEAMKAAIKWI) is the KH domain. Positions 623-691 (GQIYDGTVVK…DRGKTRLSMK (69 aa)) constitute an S1 motif domain. The disordered stretch occupies residues 699–720 (EDLEAKDKVAEGEKAPREAAGE). The span at 701-720 (LEAKDKVAEGEKAPREAAGE) shows a compositional bias: basic and acidic residues.

This sequence belongs to the polyribonucleotide nucleotidyltransferase family. Requires Mg(2+) as cofactor.

Its subcellular location is the cytoplasm. It catalyses the reaction RNA(n+1) + phosphate = RNA(n) + a ribonucleoside 5'-diphosphate. Functionally, involved in mRNA degradation. Catalyzes the phosphorolysis of single-stranded polyribonucleotides processively in the 3'- to 5'-direction. This Bradyrhizobium diazoefficiens (strain JCM 10833 / BCRC 13528 / IAM 13628 / NBRC 14792 / USDA 110) protein is Polyribonucleotide nucleotidyltransferase.